Consider the following 373-residue polypeptide: Transaldolase (373 aa).

The Schiff-base intermediate with substrate role is filled by lysine 143.

It belongs to the transaldolase family. Type 2 subfamily.

The protein localises to the cytoplasm. The enzyme catalyses D-sedoheptulose 7-phosphate + D-glyceraldehyde 3-phosphate = D-erythrose 4-phosphate + beta-D-fructose 6-phosphate. The protein operates within carbohydrate degradation; pentose phosphate pathway; D-glyceraldehyde 3-phosphate and beta-D-fructose 6-phosphate from D-ribose 5-phosphate and D-xylulose 5-phosphate (non-oxidative stage): step 2/3. In terms of biological role, transaldolase is important for the balance of metabolites in the pentose-phosphate pathway. The chain is Transaldolase (tal) from Mycobacterium bovis (strain ATCC BAA-935 / AF2122/97).